A 137-amino-acid chain; its full sequence is Nucleoside diphosphate kinase (137 aa).

The ATP site is built by lysine 9, phenylalanine 57, arginine 85, threonine 91, arginine 102, and asparagine 112. The active-site Pros-phosphohistidine intermediate is the histidine 115.

Belongs to the NDK family. Homotetramer. Mg(2+) is required as a cofactor.

Its subcellular location is the cytoplasm. The enzyme catalyses a 2'-deoxyribonucleoside 5'-diphosphate + ATP = a 2'-deoxyribonucleoside 5'-triphosphate + ADP. The catalysed reaction is a ribonucleoside 5'-diphosphate + ATP = a ribonucleoside 5'-triphosphate + ADP. In terms of biological role, major role in the synthesis of nucleoside triphosphates other than ATP. The ATP gamma phosphate is transferred to the NDP beta phosphate via a ping-pong mechanism, using a phosphorylated active-site intermediate. The sequence is that of Nucleoside diphosphate kinase from Geotalea daltonii (strain DSM 22248 / JCM 15807 / FRC-32) (Geobacter daltonii).